A 353-amino-acid chain; its full sequence is Tetraacyldisaccharide 4'-kinase (353 aa).

49-56 serves as a coordination point for ATP; sequence TAGGTGKT.

This sequence belongs to the LpxK family.

The catalysed reaction is a lipid A disaccharide + ATP = a lipid IVA + ADP + H(+). It functions in the pathway glycolipid biosynthesis; lipid IV(A) biosynthesis; lipid IV(A) from (3R)-3-hydroxytetradecanoyl-[acyl-carrier-protein] and UDP-N-acetyl-alpha-D-glucosamine: step 6/6. Transfers the gamma-phosphate of ATP to the 4'-position of a tetraacyldisaccharide 1-phosphate intermediate (termed DS-1-P) to form tetraacyldisaccharide 1,4'-bis-phosphate (lipid IVA). The sequence is that of Tetraacyldisaccharide 4'-kinase from Chlorobium phaeovibrioides (strain DSM 265 / 1930) (Prosthecochloris vibrioformis (strain DSM 265)).